A 437-amino-acid polypeptide reads, in one-letter code: Ribosomal protein uS12 methylthiotransferase RimO (437 aa).

The MTTase N-terminal domain maps to 9 to 124 (TKVNIVTLGC…LPAILKKFRA (116 aa)). The [4Fe-4S] cluster site is built by C18, C56, C90, C151, C155, and C158. In terms of domain architecture, Radical SAM core spans 137–367 (TTPSHYAYVK…MSIQEGISAE (231 aa)). The 68-residue stretch at 370–437 (EKKIGNTYKV…EFDLFGEIVK (68 aa)) folds into the TRAM domain.

Belongs to the methylthiotransferase family. RimO subfamily. Requires [4Fe-4S] cluster as cofactor.

Its subcellular location is the cytoplasm. The enzyme catalyses L-aspartate(89)-[ribosomal protein uS12]-hydrogen + (sulfur carrier)-SH + AH2 + 2 S-adenosyl-L-methionine = 3-methylsulfanyl-L-aspartate(89)-[ribosomal protein uS12]-hydrogen + (sulfur carrier)-H + 5'-deoxyadenosine + L-methionine + A + S-adenosyl-L-homocysteine + 2 H(+). Its function is as follows. Catalyzes the methylthiolation of an aspartic acid residue of ribosomal protein uS12. In Cytophaga hutchinsonii (strain ATCC 33406 / DSM 1761 / CIP 103989 / NBRC 15051 / NCIMB 9469 / D465), this protein is Ribosomal protein uS12 methylthiotransferase RimO.